The chain runs to 114 residues: Probable acid stress chaperone HdeA (114 aa).

The first 26 residues, 1–26 (MIKTLFNKNTALAAVAILALSGSAMA), serve as a signal peptide directing secretion. C46 and C94 are disulfide-bonded.

It belongs to the HdeA family.

Its subcellular location is the periplasm. In terms of biological role, required for optimal acid stress protection. Exhibits a chaperone-like activity only at low pH by suppressing non-specifically the aggregation of denaturated periplasmic proteins. This Brucella ovis (strain ATCC 25840 / 63/290 / NCTC 10512) protein is Probable acid stress chaperone HdeA.